The following is a 428-amino-acid chain: Putative oxidoreductase YteT (428 aa).

An N-terminal signal peptide occupies residues 1-23; that stretch reads MKNIVFCGLSSRAFSMFIKPLME.

It belongs to the Gfo/Idh/MocA family.

In terms of biological role, may play a role in the degradation of type I rhamnogalacturonan derived from plant cell walls. This is Putative oxidoreductase YteT (yteT) from Bacillus subtilis (strain 168).